Reading from the N-terminus, the 470-residue chain is Nitric oxide synthase, inducible (470 aa).

Residues Trp-2, Tyr-3, and Glu-7 each contribute to the L-arginine site. 3 residues coordinate (6R)-L-erythro-5,6,7,8-tetrahydrobiopterin: Arg-11, Trp-93, and Phe-106. Residue Tyr-121 coordinates heme b. Positions 145–165 are calmodulin-binding; sequence FKAVARAALFSSTLMSRVLAN. Residues 169–307 enclose the Flavodoxin-like domain; that stretch reads CTVLYATETG…AFSAWALTAL (139 aa). Positions 175, 176, 177, 179, 180, 221, 222, 258, 265, 291, and 295 each coordinate FMN. Residue Arg-380 participates in NADP(+) binding. His-403 is an FAD binding site. NADP(+) is bound at residue Thr-440.

Belongs to the NOS family. As to quaternary structure, homodimer. The cofactor is heme b. FAD serves as cofactor. Requires FMN as cofactor. (6R)-L-erythro-5,6,7,8-tetrahydrobiopterin is required as a cofactor.

It localises to the cytoplasm. The protein resides in the cytosol. The catalysed reaction is 2 L-arginine + 3 NADPH + 4 O2 + H(+) = 2 L-citrulline + 2 nitric oxide + 3 NADP(+) + 4 H2O. Not stimulated by calcium/calmodulin. Functionally, produces nitric oxide (NO) which is a messenger molecule with diverse functions throughout the body. In macrophages, NO mediates tumoricidal and bactericidal actions. Also has nitrosylase activity and mediates cysteine S-nitrosylation of cytoplasmic target proteins such COX2. The polypeptide is Nitric oxide synthase, inducible (nos2) (Oncorhynchus mykiss (Rainbow trout)).